The sequence spans 125 residues: Acidic phospholipase A2 6 (125 aa).

Ser1 is a signal peptide. Positions Asn2 to Leu7 are excised as a propeptide. 7 disulfides stabilise this stretch: Cys18–Cys77, Cys33–Cys124, Cys35–Cys50, Cys49–Cys105, Cys56–Cys98, Cys66–Cys91, and Cys84–Cys96. Asp30 serves as a coordination point for Zn(2+). The Ca(2+) site is built by Tyr34 and Gly36. Residue His53 is part of the active site. Asp54 contacts Ca(2+). Asp99 is a catalytic residue.

As to quaternary structure, heterodimer formed between isoform 5 and isoform 6 in presence of zinc ion and monomer in absence of zinc ion. Requires Ca(2+) as cofactor. As to expression, expressed by the venom gland.

It localises to the secreted. The enzyme catalyses a 1,2-diacyl-sn-glycero-3-phosphocholine + H2O = a 1-acyl-sn-glycero-3-phosphocholine + a fatty acid + H(+). PLA2 catalyzes the calcium-dependent hydrolysis of the 2-acyl groups in 3-sn-phosphoglycerides. In Naja sagittifera (Andaman cobra), this protein is Acidic phospholipase A2 6.